The chain runs to 324 residues: tRNA (cytidine(32)/guanosine(34)-2'-O)-methyltransferase (324 aa).

The S-adenosyl-L-methionine site is built by glycine 53, tryptophan 55, aspartate 75, aspartate 91, and aspartate 116. Residue lysine 156 is the Proton acceptor of the active site. The tract at residues aspartate 221 to aspartate 240 is required for binding to WDR6.

The protein belongs to the class I-like SAM-binding methyltransferase superfamily. RNA methyltransferase RlmE family. TRM7 subfamily. In terms of assembly, interacts with WDR6; the interaction is direct, and required for 2'-O-methylation of position 34 in substrate tRNAs.

The protein localises to the cytoplasm. It is found in the nucleus. The enzyme catalyses cytidine(32)/guanosine(34) in tRNA + 2 S-adenosyl-L-methionine = 2'-O-methylcytidine(32)/2'-O-methylguanosine(34) in tRNA + 2 S-adenosyl-L-homocysteine + 2 H(+). Methylates the 2'-O-ribose of nucleotides at positions 32 and 34 of the tRNA anticodon loop of substrate tRNAs. Requisite for faithful cytoplasmic translation. Requires THADA for methylation of the cytidine at position 32 of the anticodon loop of substrate tRNAs. Requires WDR6 for methylation of the nucleotide at position 34 of the anticodon loop of substrate tRNAs. Promotes translation efficiency of the UUU codon. Plays a role in neurogenesis. Required for expression of genes involved in neurogenesis and mitochondrial translation and energy generation. Requisite for RNA-mediated gene silencing. May modify position 32 in tRNA(Arg(ACG)), tRNA(Gln(CUG)), tRNA(Leu(UAA)), tRNA(Leu(UAG)), tRNA(Leu(AAG)), tRNA(Leu(CAG)), tRNA(Phe(GAA)), tRNA(Trp(CCA)) and tRNA(Val(AAC)), and position 34 in tRNA(Phe(GAA)), tRNA(Leu(CAA)), tRNA(Leu(UAA)), tRNA(Sec(UCA)), and tRNA(Trp(CCA)). The sequence is that of tRNA (cytidine(32)/guanosine(34)-2'-O)-methyltransferase from Mus musculus (Mouse).